A 237-amino-acid polypeptide reads, in one-letter code: Flagellar L-ring protein (237 aa).

The signal sequence occupies residues 1–16 (MIKRSAVVLMAVILTG). A lipid anchor (N-palmitoyl cysteine) is attached at Cys-17. The S-diacylglycerol cysteine moiety is linked to residue Cys-17. The disordered stretch occupies residues 122-143 (PPDSSGDMSTDSNSSSDGKGSV). A compositionally biased stretch (low complexity) spans 124–140 (DSSGDMSTDSNSSSDGK).

It belongs to the FlgH family. The basal body constitutes a major portion of the flagellar organelle and consists of four rings (L,P,S, and M) mounted on a central rod.

The protein localises to the cell outer membrane. It is found in the bacterial flagellum basal body. Its function is as follows. Assembles around the rod to form the L-ring and probably protects the motor/basal body from shearing forces during rotation. This is Flagellar L-ring protein from Allorhizobium ampelinum (strain ATCC BAA-846 / DSM 112012 / S4) (Agrobacterium vitis (strain S4)).